Consider the following 314-residue polypeptide: Small ribosomal subunit protein uS2c (314 aa).

This sequence belongs to the universal ribosomal protein uS2 family.

The protein resides in the plastid. The protein localises to the chloroplast. The polypeptide is Small ribosomal subunit protein uS2c (rps2) (Stigeoclonium helveticum (Green alga)).